A 561-amino-acid chain; its full sequence is Eukaryotic translation initiation factor 3 subunit D-1 (561 aa).

The interval 98–164 (VQKPPHQRGR…RGPPPKMRES (67 aa)) is disordered. The segment covering 100–121 (KPPHQRGRFRNMRNSRSGRGRN) has biased composition (basic residues). Residue T128 is modified to Phosphothreonine. The RNA gate stretch occupies residues 289 to 303 (EFDLLTVNETSVEPP).

Belongs to the eIF-3 subunit D family. As to quaternary structure, component of the eukaryotic translation initiation factor 3 (eIF-3) complex. The eIF-3 complex interacts with pix.

It is found in the cytoplasm. Its function is as follows. mRNA cap-binding component of the eukaryotic translation initiation factor 3 (eIF-3) complex, which is involved in protein synthesis of a specialized repertoire of mRNAs and, together with other initiation factors, stimulates binding of mRNA and methionyl-tRNAi to the 40S ribosome. The eIF-3 complex specifically targets and initiates translation of a subset of mRNAs involved in cell proliferation. In the eIF-3 complex, eif3d specifically recognizes and binds the 7-methylguanosine cap of a subset of mRNAs. The chain is Eukaryotic translation initiation factor 3 subunit D-1 from Drosophila ananassae (Fruit fly).